Reading from the N-terminus, the 275-residue chain is Large ribosomal subunit protein uL2 (275 aa).

A compositionally biased stretch (basic and acidic residues) spans 28-38; sequence RPYEPLVETKS. Disordered regions lie at residues 28–53 and 222–275; these read RPYEPLVETKSKSGGRNNVGRITTRH and GVAM…RSAK. Over residues 254-275 the composition is skewed to basic residues; it reads KGHKTRKNKRTDKMIVRRRSAK.

This sequence belongs to the universal ribosomal protein uL2 family. As to quaternary structure, part of the 50S ribosomal subunit. Forms a bridge to the 30S subunit in the 70S ribosome.

Its function is as follows. One of the primary rRNA binding proteins. Required for association of the 30S and 50S subunits to form the 70S ribosome, for tRNA binding and peptide bond formation. It has been suggested to have peptidyltransferase activity; this is somewhat controversial. Makes several contacts with the 16S rRNA in the 70S ribosome. The polypeptide is Large ribosomal subunit protein uL2 (Marinobacter nauticus (strain ATCC 700491 / DSM 11845 / VT8) (Marinobacter aquaeolei)).